The primary structure comprises 154 residues: Large ribosomal subunit protein bL9c (154 aa).

Belongs to the bacterial ribosomal protein bL9 family.

The protein localises to the plastid. It is found in the chloroplast. In terms of biological role, binds to the 23S rRNA. The sequence is that of Large ribosomal subunit protein bL9c from Gracilaria tenuistipitata var. liui (Red alga).